A 635-amino-acid chain; its full sequence is 1-deoxy-D-xylulose-5-phosphate synthase (635 aa).

Residues histidine 73 and 114–116 contribute to the thiamine diphosphate site; that span reads SHA. Aspartate 146 is a Mg(2+) binding site. Thiamine diphosphate-binding positions include 147–148, asparagine 176, tyrosine 287, and glutamate 368; that span reads GA. Asparagine 176 serves as a coordination point for Mg(2+).

It belongs to the transketolase family. DXPS subfamily. In terms of assembly, homodimer. It depends on Mg(2+) as a cofactor. The cofactor is thiamine diphosphate.

It catalyses the reaction D-glyceraldehyde 3-phosphate + pyruvate + H(+) = 1-deoxy-D-xylulose 5-phosphate + CO2. It functions in the pathway metabolic intermediate biosynthesis; 1-deoxy-D-xylulose 5-phosphate biosynthesis; 1-deoxy-D-xylulose 5-phosphate from D-glyceraldehyde 3-phosphate and pyruvate: step 1/1. Its function is as follows. Catalyzes the acyloin condensation reaction between C atoms 2 and 3 of pyruvate and glyceraldehyde 3-phosphate to yield 1-deoxy-D-xylulose-5-phosphate (DXP). The protein is 1-deoxy-D-xylulose-5-phosphate synthase of Corynebacterium diphtheriae (strain ATCC 700971 / NCTC 13129 / Biotype gravis).